Here is a 132-residue protein sequence, read N- to C-terminus: DNA-binding protein inhibitor ID-2 (132 aa).

One can recognise a bHLH domain in the interval 23–75 (ARSKTPVDDPMSLLYNMNDCYSKLKELVPSIPQNKKVSKMEILQHVIDYILDL). The Nuclear export signal motif lies at 105-114 (LNTDISILSL).

As to quaternary structure, heterodimer with other HLH proteins.

The protein localises to the cytoplasm. It is found in the nucleus. In terms of biological role, transcriptional regulator (lacking a basic DNA binding domain) which negatively regulates the basic helix-loop-helix (bHLH) transcription factors by forming heterodimers and inhibiting their DNA binding and transcriptional activity. Inhibits the activity of both neurogenic (neurod1/neuroD) and myogenic (myod1/myoD) bHLH factors. May play a role in the regulation of the circadian clock. This is DNA-binding protein inhibitor ID-2 from Xenopus tropicalis (Western clawed frog).